The sequence spans 88 residues: Small ribosomal subunit protein uS17 (88 aa).

Belongs to the universal ribosomal protein uS17 family. Part of the 30S ribosomal subunit.

One of the primary rRNA binding proteins, it binds specifically to the 5'-end of 16S ribosomal RNA. The chain is Small ribosomal subunit protein uS17 from Lactobacillus helveticus (strain DPC 4571).